The chain runs to 528 residues: MLSRTILFSTSFLWVRVANAAFGITTSDDSYVIDAGSANSLKFTVSRSSCDITSINYYGSELQYSGTGSHIGSGLGSADVSAVEDGDYIKVTCDTDTLTQYFVVHNGDSVIHMATYTTEEPSVGELRFIARLNSELLPNEEPFGDVSTTSGGEAIEGSDVFLVDGETRSKFYSSQRFIDDQRHCVAGDAHRVCMILNQYETSSGGPFFRDINSNNGGSYNSLYWYMNSGHVQTEDRRQGLHGPYSMYFSRSGTPSTDIDTSFFANLDIKGYVAADGRGTVSGTASGADSSFKWVVHWYNADAQYWTYTSSDGSFTSPAMKPGDYTMVYYQGEYKVAETSVSVTAGSSTSKDISGFVETGDTIFKIGDWDGTPTGFRNAENQLRMHPSDSRMSSWGPLTYTVGSSELTDFPMAAFKGVNDPVTIKFTATSAQTGAATLRIGTTLSFAGGRPQATINDYEGSAPSAPTNLNSRGVTRGAYRGLGEVYDVNIPSGTIVEGENTITISVISGSSGDEFLAPNFIFDCVELFQ.

An N-terminal signal peptide occupies residues 1–20 (MLSRTILFSTSFLWVRVANA). 2 disulfide bridges follow: cysteine 50–cysteine 93 and cysteine 184–cysteine 193.

Belongs to the polysaccharide lyase 4 family.

Its subcellular location is the secreted. It carries out the reaction Endotype eliminative cleavage of L-alpha-rhamnopyranosyl-(1-&gt;4)-alpha-D-galactopyranosyluronic acid bonds of rhamnogalacturonan I domains in ramified hairy regions of pectin leaving L-rhamnopyranose at the reducing end and 4-deoxy-4,5-unsaturated D-galactopyranosyluronic acid at the non-reducing end.. Functionally, pectinolytic enzymes consist of four classes of enzymes: pectin lyase, polygalacturonase, pectin methylesterase and rhamnogalacturonase. Degrades the rhamnogalacturonan I (RG-I) backbone of pectin. The polypeptide is Probable rhamnogalacturonate lyase A (rglA) (Aspergillus flavus (strain ATCC 200026 / FGSC A1120 / IAM 13836 / NRRL 3357 / JCM 12722 / SRRC 167)).